Reading from the N-terminus, the 147-residue chain is Large ribosomal subunit protein uL13 (147 aa).

Belongs to the universal ribosomal protein uL13 family. Part of the 50S ribosomal subunit.

Functionally, this protein is one of the early assembly proteins of the 50S ribosomal subunit, although it is not seen to bind rRNA by itself. It is important during the early stages of 50S assembly. The sequence is that of Large ribosomal subunit protein uL13 from Rhodococcus erythropolis (strain PR4 / NBRC 100887).